Here is a 246-residue protein sequence, read N- to C-terminus: Proteasome subunit alpha type-6 (246 aa).

It belongs to the peptidase T1A family. As to quaternary structure, the 26S proteasome consists of a 20S proteasome core and two 19S regulatory subunits. The 20S proteasome core is composed of 28 subunits that are arranged in four stacked rings, resulting in a barrel-shaped structure. The two end rings are each formed by seven alpha subunits, and the two central rings are each formed by seven beta subunits. The catalytic chamber with the active sites is on the inside of the barrel.

It localises to the cytoplasm. The protein localises to the nucleus. Functionally, the proteasome is a multicatalytic proteinase complex which is characterized by its ability to cleave peptides with Arg, Phe, Tyr, Leu, and Glu adjacent to the leaving group at neutral or slightly basic pH. The proteasome has an ATP-dependent proteolytic activity. This is Proteasome subunit alpha type-6 (pas-1) from Caenorhabditis elegans.